The primary structure comprises 1206 residues: Translocase of chloroplast 132, chloroplastic (1206 aa).

N-acetylglycine is present on Gly-2. Positions 13–33 (REDKKLAEDRISDEQVVKNEL) form a coiled coil. Disordered regions lie at residues 33–75 (LVRS…SDDL) and 97–119 (VGDLDETSSNEGGVKDFTAVGES). The segment covering 39–49 (VRDDNEDEVFE) has biased composition (acidic residues). Ser-195 carries the post-translational modification Phosphoserine. The tract at residues 233–499 (QTEQEVEEGE…TTTEADEHDE (267 aa)) is disordered. The span at 309–324 (AYTSNIVTNASGDNEV) shows a compositional bias: polar residues. A compositionally biased stretch (low complexity) spans 325–336 (SSAVTSSPLEES). Residues Ser-337, Ser-363, and Ser-398 each carry the phosphoserine modification. Over residues 357 to 379 (LASSPHSYPESTEVHSNSGSPGV) the composition is skewed to polar residues. Residues 403-427 (KELEKQQSSRVHVDPEITENSHVET) show a composition bias toward basic and acidic residues. The span at 430–440 (EVVSSVSPTES) shows a compositional bias: low complexity. A compositionally biased stretch (polar residues) spans 468-492 (APQQSRVNGNGSHNQFQQAEDSTTT). The region spanning 572 to 801 (DFSCTIMVLG…KLQDNIPGRP (230 aa)) is the AIG1-type G domain. The tract at residues 581–588 (GKSGVGKS) is G1. GTP contacts are provided by residues 584 to 589 (GVGKSA) and 603 to 608 (DAFQMG). Residue Ser-588 coordinates Mg(2+). The homodimerization stretch occupies residues 603-606 (DAFQ). Residues 607 to 611 (MGTKR) are G2. A G3 region spans residues 628–631 (DTPG). Residues 666–671 (RLDMQS) form a homodimerization region. Residues 700–703 (THAA) are G4. Residues His-701 and 749–750 (EN) each bind GTP. Residues 749-751 (ENH) form a G5 region. The tract at residues 824–862 (QPKLPEQQYGDEEDEDDLEESSDSDEESEYDQLPPFKSL) is disordered. Over residues 832–853 (YGDEEDEDDLEESSDSDEESEY) the composition is skewed to acidic residues. The helical transmembrane segment at 1182-1199 (LAMVAIVPLFKKLLSYYY) threads the bilayer.

It belongs to the TRAFAC class TrmE-Era-EngA-EngB-Septin-like GTPase superfamily. AIG1/Toc34/Toc159-like paraseptin GTPase family. TOC159 subfamily. In terms of assembly, homodimer. Part of the TOC core complex that includes 1 protein for the specific recognition of transit peptides surrounded by a ring composed of four proteins forming translocation channels, and four to five GTP-binding proteins providing energy. This core complex can interact with components of the TIC complex to form a larger import complex. Chloroplastic protein precursor such as prSS (precursor of the RuBisCO small subunit) interacts with these complexes. The TOC complex contains a specific subset of polar lipids such as digalactosyldiacylglyceride (DGDG), phosphatidylcholine (PC) and phosphatidylglycerol (PG). Requires Mg(2+) as cofactor. Post-translationally, phosphorylated by KOC1. Expressed in seedlings, leaves, flowers, and roots.

The protein resides in the plastid. It localises to the chloroplast outer membrane. The protein localises to the cytoplasm. Its function is as follows. GTPase involved in protein precursor import into chloroplasts. Seems to recognize chloroplast-destined precursor proteins and regulate their presentation to the translocation channel through GTP hydrolysis. Probably specialized in the import of nuclear encoded non-photosynthetic preproteins from the cytoplasm to the chloroplast. In Arabidopsis thaliana (Mouse-ear cress), this protein is Translocase of chloroplast 132, chloroplastic.